Reading from the N-terminus, the 271-residue chain is Short chain dehydrogenase asqE (271 aa).

Ile-22, Asp-70, and Asn-99 together coordinate NADP(+). Catalysis depends on proton donor residues Ser-152 and Ser-153. NADP(+) contacts are provided by Tyr-167, Lys-171, and Thr-203. Tyr-167 acts as the Proton acceptor in catalysis. The active-site Lowers pKa of active site Tyr is the Lys-171.

The protein belongs to the short-chain dehydrogenases/reductases (SDR) family.

It carries out the reaction a primary alcohol + NAD(+) = an aldehyde + NADH + H(+). It catalyses the reaction a secondary alcohol + NAD(+) = a ketone + NADH + H(+). It participates in secondary metabolite biosynthesis. It functions in the pathway alkaloid biosynthesis. The protein operates within mycotoxin biosynthesis. In terms of biological role, short chain dehydrogenase; part of the gene cluster that mediates the biosynthesis of the aspoquinolone mycotoxins. The role of asqE within the aspoquinolone pathway has still to be determined. The first step of the pathway is catalyzed by the nonribosomal peptide synthetase asqK that condenses anthranilic acid and O-methyl-L-tyrosine to produce 4'-methoxycyclopeptin. 4'-methoxycyclopeptin is then converted to 4'-methoxydehydrocyclopeptin by the ketoglutarate-dependent dioxygenase asqJ. AsqJ also converts its first product 4'-methoxydehydrocyclopeptin to 4'-methoxycyclopenin. The following conversion of 4'-methoxycyclopenin into 4'-methoxyviridicatin is catalyzed by the cyclopenase asqI. 4'-methoxyviridicatin is the precursor of quinolone natural products, and is further converted to quinolinone B. The prenyltransferase asqH1 then catalyzes the canonical Friedel-Crafts alkylation of quinolinone B with dimethylallyl cation to yield dimethylallyl quinolone, which is subjected to FAD-dependent dehydrogenation by the FAD-linked oxidoreductase asqF to yield conjugated aryl diene. The delta(3') double bond then serves as the site of the second alkylation with DMAPP catalyzed by the prenyltransferase asqH2 to yield a carbenium ion intermediate, which can be attacked by H(2)O to yield a styrenyl quinolone containing a C3'-hydroxyprenyl chain. The FAD-dependent monooxygenase asqG performs epoxidation of the terminal C7'-C8' olefin. Finally, after dehydratation of the epoxide at C3 by asqC, the quinolone epoxide rearrangement protein asqO catalyzes an enzymatic 3-exo-tet cyclization to yield the cyclopropyl-THF ring system in aspoquinolone. The sequence is that of Short chain dehydrogenase asqE from Emericella nidulans (strain FGSC A4 / ATCC 38163 / CBS 112.46 / NRRL 194 / M139) (Aspergillus nidulans).